We begin with the raw amino-acid sequence, 50 residues long: Protein hunchback (50 aa).

3 C2H2-type zinc fingers span residues 1 to 5 (HLRNH), 11 to 33 (FKCN…MKSH), and 39 to 50 (YRCADCTYATKY).

It belongs to the hunchback C2H2-type zinc-finger protein family.

It localises to the nucleus. Functionally, gap class segmentation protein that controls development of head structures. The polypeptide is Protein hunchback (hb) (Platynereis dumerilii (Dumeril's clam worm)).